Here is a 224-residue protein sequence, read N- to C-terminus: Processed variable antigen (224 aa).

Repeat copies occupy residues 1-6 (ETGESK), 7-12 (ETGESK), 13-18 (ETGESK), 19-24 (ETGESK), 25-30 (ETGESK), 31-36 (ETGESK), 37-42 (ETGESK), 43-48 (ETGESK), 49-54 (ETGESK), 55-60 (ETGESK), 61-66 (ETGESK), 67-72 (ETGESK), 73-78 (ETGESK), 79-84 (ETGESK), 85-90 (ETGESK), 91-96 (ETGESK), and 97-102 (ETGESK). Positions 1–102 (ETGESKETGE…GESKETGESK (102 aa)) are 17 X 6 AA tandem repeats of E-T-G-E-S-K. The segment covering 1 to 137 (ETGESKETGE…TEESKDREGN (137 aa)) has biased composition (basic and acidic residues). The segment at 1-224 (ETGESKETGE…KKADNKKKKK (224 aa)) is disordered. The span at 144–153 (ENSENSNVTS) shows a compositional bias: low complexity. 2 stretches are compositionally biased toward basic and acidic residues: residues 156-173 (EETKKLAEKEENEGEKLG) and 185-217 (EDPKKLTEQEENGTKESSEETKDDKPEENEKKA).

The polypeptide is Processed variable antigen (Plasmodium falciparum).